Here is a 262-residue protein sequence, read N- to C-terminus: Shikimate dehydrogenase (NADP(+)) (262 aa).

Shikimate-binding positions include 15 to 17 (SRS) and threonine 62. The active-site Proton acceptor is the lysine 66. Glutamate 78 lines the NADP(+) pocket. Residues asparagine 87 and aspartate 102 each contribute to the shikimate site. NADP(+) contacts are provided by residues 126–130 (GAGGA), 150–155 (NRTLAR), and methionine 214. Tyrosine 216 is a shikimate binding site. Glycine 236 lines the NADP(+) pocket.

This sequence belongs to the shikimate dehydrogenase family. In terms of assembly, homodimer.

It catalyses the reaction shikimate + NADP(+) = 3-dehydroshikimate + NADPH + H(+). The protein operates within metabolic intermediate biosynthesis; chorismate biosynthesis; chorismate from D-erythrose 4-phosphate and phosphoenolpyruvate: step 4/7. Its function is as follows. Involved in the biosynthesis of the chorismate, which leads to the biosynthesis of aromatic amino acids. Catalyzes the reversible NADPH linked reduction of 3-dehydroshikimate (DHSA) to yield shikimate (SA). The protein is Shikimate dehydrogenase (NADP(+)) of Acinetobacter baumannii (strain AB0057).